Reading from the N-terminus, the 500-residue chain is Probable cytosol aminopeptidase (500 aa).

The Mn(2+) site is built by Lys264 and Asp269. Residue Lys276 is part of the active site. Asp287, Asp346, and Glu348 together coordinate Mn(2+). Arg350 is an active-site residue.

This sequence belongs to the peptidase M17 family. Mn(2+) is required as a cofactor.

It localises to the cytoplasm. The enzyme catalyses Release of an N-terminal amino acid, Xaa-|-Yaa-, in which Xaa is preferably Leu, but may be other amino acids including Pro although not Arg or Lys, and Yaa may be Pro. Amino acid amides and methyl esters are also readily hydrolyzed, but rates on arylamides are exceedingly low.. The catalysed reaction is Release of an N-terminal amino acid, preferentially leucine, but not glutamic or aspartic acids.. Presumably involved in the processing and regular turnover of intracellular proteins. Catalyzes the removal of unsubstituted N-terminal amino acids from various peptides. The polypeptide is Probable cytosol aminopeptidase (Chlamydia abortus (strain DSM 27085 / S26/3) (Chlamydophila abortus)).